A 143-amino-acid polypeptide reads, in one-letter code: Transcription antitermination protein NusB (143 aa).

It belongs to the NusB family.

In terms of biological role, involved in transcription antitermination. Required for transcription of ribosomal RNA (rRNA) genes. Binds specifically to the boxA antiterminator sequence of the ribosomal RNA (rrn) operons. The chain is Transcription antitermination protein NusB from Desulfatibacillum aliphaticivorans.